The chain runs to 607 residues: Chaperone protein DnaK (607 aa).

T174 is subject to Phosphothreonine; by autocatalysis. Positions 571–607 (AAMYQKQAQQQQPGPGPDAGKDKDDKDKTVDADYEVK) are disordered. Residues 589–607 (AGKDKDDKDKTVDADYEVK) show a composition bias toward basic and acidic residues.

It belongs to the heat shock protein 70 family.

In terms of biological role, acts as a chaperone. This Desulforudis audaxviator (strain MP104C) protein is Chaperone protein DnaK.